The primary structure comprises 587 residues: Branchpoint-bridging protein (587 aa).

The segment covering 1-16 has biased composition (polar residues); the sequence is MLNSRSVGSTGSNNTP. Disordered stretches follow at residues 1-64 and 121-142; these read MLNS…DGRG and GDVV…DNHG. A compositionally biased stretch (basic and acidic residues) spans 44-64; sequence DSYKSNSRMDHRPDGYHDGRG. A phosphoserine mark is found at serine 131 and serine 133. The KH domain occupies 191–271; the sequence is YVPVKDYPEI…DKINHAIKLI (81 aa). 2 CCHC-type zinc fingers span residues 309 to 326 and 334 to 351; these read QVCQ…DCPE and IVCR…DCPV. 2 disordered regions span residues 375–490 and 551–587; these read GGGS…PGTS and IPGA…YSNR. Over residues 379 to 399 the composition is skewed to polar residues; it reads AISNGNGEPQKSIEFSESGAA. Positions 410–454 are enriched in low complexity; that stretch reads AAASTSVSSSTSSPAPWAKPASSAAPSNPAPWQQPAAPQSAPALS. Composition is skewed to polar residues over residues 465-483 and 563-573; these read QPTQ…SQNA and SYNTSESSNLN.

It belongs to the BBP/SF1 family. As to quaternary structure, U2AF large subunit (u2af59), U2AF small subunit (u2af23) and bpb1 interact to form a complex required for complex A formation.

Its subcellular location is the cytoplasm. It localises to the nucleus. Functionally, necessary for the splicing of pre-mRNA. The BPB1(SF1)-u2af59-u2af23 complex has a role in the recognition of the branch site (5'-UACUAAC-3'), the pyrimidine tract and the 3'-splice site at the 3'-end of introns. This Schizosaccharomyces pombe (strain 972 / ATCC 24843) (Fission yeast) protein is Branchpoint-bridging protein (bpb1).